We begin with the raw amino-acid sequence, 93 residues long: Alpha-defensin 2 (93 aa).

Residues 1–19 form the signal peptide; sequence MKPLVLLSALVLLSFQVQA. Positions 20–58 are excised as a propeptide; that stretch reads DPIQNTDEETKTEEQSGEEDQAVSVSFGDREGASLQEES. Residues 23 to 49 are disordered; sequence QNTDEETKTEEQSGEEDQAVSVSFGDR. 3 disulfide bridges follow: Cys64-Cys92, Cys66-Cys81, and Cys71-Cys91.

Belongs to the alpha-defensin family. In terms of tissue distribution, paneth cells of the small bowel.

It localises to the secreted. Functionally, has broad-spectrum antimicrobial properties. Has antibacterial activity against the Gram-positive bacterium L.monocytogenes EGD and the Gram-negative bacteria E.coli ML-35p and avirulent S.typhimurium 7953, but not against the mouse-virulent S.typhimurium 14028S. Probably contributes to the antimicrobial barrier function of the small bowel mucosa. This is Alpha-defensin 2 (Defa2) from Mus musculus (Mouse).